Reading from the N-terminus, the 33-residue chain is Alpha-amanitin proprotein (33 aa).

Residues 1–10 (MSDINATRLP) constitute a propeptide that is removed on maturation. A (3R,4R)-4,5-dihydroxyisoleucine; in form alpha-amanitin modification is found at isoleucine 11. Isoleucine 11 is modified ((3R,4S)-4-hydroxyisoleucine; in form gamma-amanitin). A cross-link (cyclopeptide (Ile-Pro)) is located at residues 11 to 18 (IWGIGCNP). Residues 12 to 16 (WGIGC) constitute a cross-link (2'-cysteinyl-6'-hydroxytryptophan sulfoxide (Trp-Cys)). Residue proline 18 is modified to 4-hydroxyproline. A propeptide spanning residues 19-33 (SVGDEVTALLASGEA) is cleaved from the precursor.

Belongs to the MSDIN fungal toxin family. In terms of processing, processed by the macrocyclase-peptidase enzyme POPB to yield a toxic cyclic decapeptide. POPB first removes 10 residues from the N-terminus. Conformational trapping of the remaining peptide forces the enzyme to release this intermediate rather than proceed to macrocyclization. The enzyme rebinds the remaining peptide in a different conformation and catalyzes macrocyclization of the N-terminal 8 residues.

Functionally, major toxin belonging to the bicyclic octapeptides amatoxins that acts by binding non-competitively to RNA polymerase II and greatly slowing the elongation of transcripts from target promoters. This is Alpha-amanitin proprotein from Amanita rimosa.